The following is a 184-amino-acid chain: MADEQLNEKDLNAEEAGAVDNGARVQELEEQLAAAKDQSLRAVADLQNVRRRAEQDVEKAHKFALEKFAGDLLPVIDSLELALAHSSAEDEQVKKIREGVELTLKMFQDTLKRYNLEAIDPHGQPFNAEHHQAMAMQESAEVEPNSVLNVFQKGYLLNGRLLRPAMVVVSKAPSAPQPSIDEKA.

A compositionally biased stretch (basic and acidic residues) spans 1-12 (MADEQLNEKDLN). A disordered region spans residues 1–22 (MADEQLNEKDLNAEEAGAVDNG).

This sequence belongs to the GrpE family. Homodimer.

Its subcellular location is the cytoplasm. Participates actively in the response to hyperosmotic and heat shock by preventing the aggregation of stress-denatured proteins, in association with DnaK and GrpE. It is the nucleotide exchange factor for DnaK and may function as a thermosensor. Unfolded proteins bind initially to DnaJ; upon interaction with the DnaJ-bound protein, DnaK hydrolyzes its bound ATP, resulting in the formation of a stable complex. GrpE releases ADP from DnaK; ATP binding to DnaK triggers the release of the substrate protein, thus completing the reaction cycle. Several rounds of ATP-dependent interactions between DnaJ, DnaK and GrpE are required for fully efficient folding. The protein is Protein GrpE of Pseudomonas putida (strain W619).